Reading from the N-terminus, the 96-residue chain is Co-chaperonin GroES (96 aa).

Belongs to the GroES chaperonin family. As to quaternary structure, heptamer of 7 subunits arranged in a ring. Interacts with the chaperonin GroEL.

The protein localises to the cytoplasm. Its function is as follows. Together with the chaperonin GroEL, plays an essential role in assisting protein folding. The GroEL-GroES system forms a nano-cage that allows encapsulation of the non-native substrate proteins and provides a physical environment optimized to promote and accelerate protein folding. GroES binds to the apical surface of the GroEL ring, thereby capping the opening of the GroEL channel. The protein is Co-chaperonin GroES of Shewanella pealeana (strain ATCC 700345 / ANG-SQ1).